A 964-amino-acid polypeptide reads, in one-letter code: Translation initiation factor IF-2 (964 aa).

Positions 105–119 are enriched in low complexity; it reads AALAESEASEAAPVV. 2 disordered regions span residues 105–133 and 146–378; these read AALAESEASEAAPVVDAEEVARREEEHRR and KARQ…PTEP. Composition is skewed to basic and acidic residues over residues 123 to 133, 146 to 183, 197 to 253, and 266 to 278; these read EVARREEEHRR, KARQEAMEREEAERRARQEAAEAEQKRQAELAAKKAEE, EAPR…RAIR, and PAERKAEEVKKAE. The span at 288-302 shows a compositional bias: low complexity; sequence KPAGEARPAAAKKPA. Residues 303–313 are compositionally biased toward pro residues; sequence APAPAAAPAPG. Residues 464–633 form the tr-type G domain; the sequence is TRPPVVTVMG…LLQAEVLELK (170 aa). The segment at 473–480 is G1; it reads GHVDHGKT. Residue 473–480 coordinates GTP; the sequence is GHVDHGKT. The interval 498–502 is G2; the sequence is GITQH. The tract at residues 519-522 is G3; it reads DTPG. Residues 519–523 and 573–576 each bind GTP; these read DTPGH and TKVD. A G4 region spans residues 573–576; the sequence is TKVD. The G5 stretch occupies residues 609–611; it reads SAK.

It belongs to the TRAFAC class translation factor GTPase superfamily. Classic translation factor GTPase family. IF-2 subfamily.

The protein localises to the cytoplasm. Functionally, one of the essential components for the initiation of protein synthesis. Protects formylmethionyl-tRNA from spontaneous hydrolysis and promotes its binding to the 30S ribosomal subunits. Also involved in the hydrolysis of GTP during the formation of the 70S ribosomal complex. This chain is Translation initiation factor IF-2, found in Ralstonia pickettii (strain 12J).